The primary structure comprises 350 residues: DNA polymerase IV (350 aa).

The region spanning isoleucine 6 to glycine 187 is the UmuC domain. Residues aspartate 10 and aspartate 105 each coordinate Mg(2+). The active site involves glutamate 106.

Belongs to the DNA polymerase type-Y family. As to quaternary structure, monomer. It depends on Mg(2+) as a cofactor.

The protein localises to the cytoplasm. The catalysed reaction is DNA(n) + a 2'-deoxyribonucleoside 5'-triphosphate = DNA(n+1) + diphosphate. Poorly processive, error-prone DNA polymerase involved in untargeted mutagenesis. Copies undamaged DNA at stalled replication forks, which arise in vivo from mismatched or misaligned primer ends. These misaligned primers can be extended by PolIV. Exhibits no 3'-5' exonuclease (proofreading) activity. May be involved in translesional synthesis, in conjunction with the beta clamp from PolIII. The sequence is that of DNA polymerase IV from Protochlamydia amoebophila (strain UWE25).